Reading from the N-terminus, the 249-residue chain is Proteasome subunit alpha type-3 (249 aa).

S2 bears the N-acetylserine mark. O-acetylserine is present on residues S214 and S220. K221 participates in a covalent cross-link: Glycyl lysine isopeptide (Lys-Gly) (interchain with G-Cter in ubiquitin).

Belongs to the peptidase T1A family. In terms of assembly, component of the 20S core complex of the 26S proteasome. The 26S proteasome is composed of a core protease (CP), known as the 20S proteasome, capped at one or both ends by the 19S regulatory particle (RP/PA700). The 20S proteasome core is composed of 28 subunits that are arranged in four stacked rings, resulting in a barrel-shaped structure. The two end rings are each formed by seven alpha subunits, and the two central rings are each formed by seven beta subunits. The catalytic chamber with the active sites is on the inside of the barrel. In terms of tissue distribution, ubiquitous low levels.

It localises to the cytoplasm. It is found in the nucleus. Its function is as follows. The proteasome is a multicatalytic proteinase complex which is characterized by its ability to cleave peptides with Arg, Phe, Tyr, Leu, and Glu adjacent to the leaving group at neutral or slightly basic pH. The proteasome has an ATP-dependent proteolytic activity. This Arabidopsis thaliana (Mouse-ear cress) protein is Proteasome subunit alpha type-3 (PAG1).